A 126-amino-acid polypeptide reads, in one-letter code: MPKKAGATSKGKNQTKEPETAPPAAGPVATDPKGFVTIAIHAKPGSRQNAVTDLSTEAVGVAIAAPPSEGEANAELCRYLSKVLDLRKSDVVLDKGGKSREKVVKLLASTTPEEVLEKLKTEAEKK.

The disordered stretch occupies residues 1–32 (MPKKAGATSKGKNQTKEPETAPPAAGPVATDP). A Phosphoserine modification is found at Ser89.

This sequence belongs to the UPF0235 family.

In Mus musculus (Mouse), this protein is UPF0235 protein C15orf40 homolog.